Here is a 394-residue protein sequence, read N- to C-terminus: Beta-ketothiolase BktB (394 aa).

Cys-90 acts as the Acyl-thioester intermediate in catalysis. Residues His-350 and Cys-380 each act as proton acceptor in the active site.

The protein belongs to the thiolase-like superfamily. Thiolase family.

It carries out the reaction an acyl-CoA + acetyl-CoA = a 3-oxoacyl-CoA + CoA. It catalyses the reaction 2 acetyl-CoA = acetoacetyl-CoA + CoA. Functionally, required for efficient production of poly(beta-hydroxybutyrate-co-beta-hydroxyvalerate) (PHBV). Catalyzes the condensation of acetyl-CoA and propionyl-CoA to form beta-ketovaleryl-CoA, and the condensation of two acetyl-CoA molecules to form acetoacetyl-CoA. The polypeptide is Beta-ketothiolase BktB (bktB) (Cupriavidus necator (strain ATCC 17699 / DSM 428 / KCTC 22496 / NCIMB 10442 / H16 / Stanier 337) (Ralstonia eutropha)).